We begin with the raw amino-acid sequence, 428 residues long: Light-independent protochlorophyllide reductase subunit N (428 aa).

[4Fe-4S] cluster-binding residues include Cys29, Cys54, and Cys115.

This sequence belongs to the BchN/ChlN family. Protochlorophyllide reductase is composed of three subunits; BchL, BchN and BchB. Forms a heterotetramer of two BchB and two BchN subunits. Requires [4Fe-4S] cluster as cofactor.

It carries out the reaction chlorophyllide a + oxidized 2[4Fe-4S]-[ferredoxin] + 2 ADP + 2 phosphate = protochlorophyllide a + reduced 2[4Fe-4S]-[ferredoxin] + 2 ATP + 2 H2O. It participates in porphyrin-containing compound metabolism; bacteriochlorophyll biosynthesis (light-independent). Its function is as follows. Component of the dark-operative protochlorophyllide reductase (DPOR) that uses Mg-ATP and reduced ferredoxin to reduce ring D of protochlorophyllide (Pchlide) to form chlorophyllide a (Chlide). This reaction is light-independent. The NB-protein (BchN-BchB) is the catalytic component of the complex. This chain is Light-independent protochlorophyllide reductase subunit N, found in Roseobacter denitrificans (strain ATCC 33942 / OCh 114) (Erythrobacter sp. (strain OCh 114)).